Consider the following 150-residue polypeptide: Putative TBC1 domain family member 29 (150 aa).

The Rab-GAP TBC; truncated domain occupies 1-43; it reads MGHLDKEGLCTQGSSFSWLLRVLNDGISLGLTPCLWDMYLLEG. Residues 102 to 111 are compositionally biased toward polar residues; that stretch reads ESSRGPSLLQ. The disordered stretch occupies residues 102–125; it reads ESSRGPSLLQTPPRVPGQQALSRG.

The protein is Putative TBC1 domain family member 29 of Homo sapiens (Human).